The chain runs to 368 residues: Biglycan (368 aa).

An N-terminal signal peptide occupies residues 1–16 (MWPLWRLVSLLALSQA). A propeptide spanning residues 17 to 37 (LPFEQRGFWDFTLDDGPFMMN) is cleaved from the precursor. Serine 42 and serine 47 each carry an O-linked (Xyl...) (glycosaminoglycan) serine glycan. 2 disulfides stabilise this stretch: cysteine 63/cysteine 69 and cysteine 67/cysteine 76. 12 LRR repeats span residues 82–102 (KSVPKEISPDTTLLDLQNNDI), 103–126 (SELRKDDFKGLQHLYALVLVNNKI), 127–150 (SKIHEKAFSPLRKLQKLYISKNHL), 151–171 (VEIPPNLPSSLVELRIHDNRI), 172–195 (RKVPKGVFSGLRNMNCIEMGGNPL), 196–220 (ENSGFEPGAFDGLKLNYLRISEAKL), 221–241 (TGIPKDLPETLNELHLDHNKI), 242–265 (QAIELEDLLRYSKLYRLGLGHNQI), 266–289 (RMIENGSLSFLPTLRELHLDNNKL), 290–312 (ARVPSGLPDLKLLQVVYLHSNNI), 313–342 (TKVGVNDFCPMGFGVKRAYYNGISLFNNPV), and 343–368 (PYWEVQPATFRCVTDRLAIQFGNYKK). O-linked (Xyl...) (glycosaminoglycan) serine glycosylation is found at serine 180 and serine 198. Residues asparagine 270 and asparagine 311 are each glycosylated (N-linked (GlcNAc...) asparagine). A disulfide bridge connects residues cysteine 321 and cysteine 354.

The protein belongs to the small leucine-rich proteoglycan (SLRP) family. SLRP class I subfamily. As to quaternary structure, homodimer. Forms a ternary complex with MFAP2 and ELN. Post-translationally, the two attached glycosaminoglycan chains can be either chondroitin sulfate or dermatan sulfate. In terms of tissue distribution, detected in placenta (at protein level). Found in several connective tissues, especially in articular cartilages.

Its subcellular location is the secreted. It is found in the extracellular space. It localises to the extracellular matrix. Functionally, may be involved in collagen fiber assembly. The chain is Biglycan (BGN) from Homo sapiens (Human).